Reading from the N-terminus, the 305-residue chain is UDP-3-O-acyl-N-acetylglucosamine deacetylase (305 aa).

Zn(2+) contacts are provided by H79, H238, and D242. H265 acts as the Proton donor in catalysis.

The protein belongs to the LpxC family. Zn(2+) is required as a cofactor.

The enzyme catalyses a UDP-3-O-[(3R)-3-hydroxyacyl]-N-acetyl-alpha-D-glucosamine + H2O = a UDP-3-O-[(3R)-3-hydroxyacyl]-alpha-D-glucosamine + acetate. Its pathway is glycolipid biosynthesis; lipid IV(A) biosynthesis; lipid IV(A) from (3R)-3-hydroxytetradecanoyl-[acyl-carrier-protein] and UDP-N-acetyl-alpha-D-glucosamine: step 2/6. In terms of biological role, catalyzes the hydrolysis of UDP-3-O-myristoyl-N-acetylglucosamine to form UDP-3-O-myristoylglucosamine and acetate, the committed step in lipid A biosynthesis. This Mannheimia succiniciproducens (strain KCTC 0769BP / MBEL55E) protein is UDP-3-O-acyl-N-acetylglucosamine deacetylase.